Here is a 96-residue protein sequence, read N- to C-terminus: Putative defensin-like protein 263 (96 aa).

The first 26 residues, 1–26 (MEKTSLKLVFLFSLTVIALCLSLSAA), serve as a signal peptide directing secretion. Cystine bridges form between Cys48–Cys96, Cys67–Cys86, Cys73–Cys91, and Cys77–Cys93.

It belongs to the DEFL family.

It is found in the secreted. The protein is Putative defensin-like protein 263 of Arabidopsis thaliana (Mouse-ear cress).